The sequence spans 266 residues: Heat-inducible transcription repressor HrcA (266 aa).

The protein belongs to the HrcA family.

Negative regulator of class I heat shock genes (grpE-dnaK-dnaJ and groELS operons). Prevents heat-shock induction of these operons. The chain is Heat-inducible transcription repressor HrcA from Helicobacter pylori (strain J99 / ATCC 700824) (Campylobacter pylori J99).